Here is a 448-residue protein sequence, read N- to C-terminus: UDP-glycosyltransferase 79B5 (448 aa).

UDP-alpha-D-glucose contacts are provided by residues threonine 261, 320–322 (LEQ), 337–345 (HCGFGSMWE), and 359–362 (LADQ).

The protein belongs to the UDP-glycosyltransferase family.

This chain is UDP-glycosyltransferase 79B5 (UGT79B5), found in Arabidopsis thaliana (Mouse-ear cress).